A 416-amino-acid chain; its full sequence is Thyroid hormone receptor alpha (416 aa).

The tract at residues 1–30 (MEPISNVEDPNSSEGDEKRWPDGPKRKRKN) is disordered. The interval 1 to 58 (MEPISNVEDPNSSEGDEKRWPDGPKRKRKNSTCSVKSMSALSLSVQGYIPSYLEKDEP) is modulating. Residues 15 to 24 (GDEKRWPDGP) are compositionally biased toward basic and acidic residues. Zn(2+)-binding residues include cysteine 59, cysteine 62, cysteine 76, cysteine 79, cysteine 97, cysteine 103, cysteine 113, and cysteine 116. NR C4-type zinc fingers lie at residues 59-79 (CVVC…CEGC) and 97-121 (CKYD…FRKC). Residues 59-133 (CVVCGDKATG…VCMAMDLVLD (75 aa)) constitute a DNA-binding region (nuclear receptor). The 245-residue stretch at 169–413 (SEWELIRHVT…PPLFLEVFED (245 aa)) folds into the NR LBD domain. 3,3',5-triiodo-L-thyronine contacts are provided by arginine 234 and serine 283.

It belongs to the nuclear hormone receptor family. NR1 subfamily.

The protein localises to the nucleus. Its function is as follows. Nuclear hormone receptor that can act as a repressor or activator of transcription. High affinity receptor for thyroid hormones, including triiodothyronine and thyroxine. The polypeptide is Thyroid hormone receptor alpha (thra1) (Salmo salar (Atlantic salmon)).